The primary structure comprises 126 residues: Non-specific lipid-transfer protein 15 (126 aa).

The N-terminal stretch at 1–22 (MSKSIFVVCITLLVVLSPTLNA) is a signal peptide. 4 disulfides stabilise this stretch: C34–C80, C45–C57, C58–C100, and C78–C114.

Belongs to the plant LTP family.

Its function is as follows. Plant non-specific lipid-transfer proteins transfer phospholipids as well as galactolipids across membranes. May play a role in wax or cutin deposition in the cell walls of expanding epidermal cells and certain secretory tissues. This Arabidopsis thaliana (Mouse-ear cress) protein is Non-specific lipid-transfer protein 15 (LTP15).